We begin with the raw amino-acid sequence, 166 residues long: Macrocypin-5a (166 aa).

The disordered stretch occupies residues 20 to 39; that stretch reads NIPGGMYASSKDGKDEPVTA.

Belongs to the protease inhibitor I85 family.

Functionally, inhibits papain and cysteine cathepsin endopeptidases, and also inhibits cathepsins B and H, which exhibit both exopeptidase and endopeptidase activities. The chain is Macrocypin-5a from Macrolepiota procera (Parasol mushroom).